The chain runs to 294 residues: Acetyl-coenzyme A carboxylase carboxyl transferase subunit beta (294 aa).

Residues 30–294 (IMTKCPECKK…PEAGGESDGE (265 aa)) enclose the CoA carboxyltransferase N-terminal domain. Zn(2+) contacts are provided by cysteine 34, cysteine 37, cysteine 53, and cysteine 56. The C4-type zinc finger occupies 34–56 (CPECKKIMYTKELQKNLMVCNYC).

It belongs to the AccD/PCCB family. In terms of assembly, acetyl-CoA carboxylase is a heterohexamer composed of biotin carboxyl carrier protein (AccB), biotin carboxylase (AccC) and two subunits each of ACCase subunit alpha (AccA) and ACCase subunit beta (AccD). Zn(2+) serves as cofactor.

It is found in the cytoplasm. The enzyme catalyses N(6)-carboxybiotinyl-L-lysyl-[protein] + acetyl-CoA = N(6)-biotinyl-L-lysyl-[protein] + malonyl-CoA. Its pathway is lipid metabolism; malonyl-CoA biosynthesis; malonyl-CoA from acetyl-CoA: step 1/1. Functionally, component of the acetyl coenzyme A carboxylase (ACC) complex. Biotin carboxylase (BC) catalyzes the carboxylation of biotin on its carrier protein (BCCP) and then the CO(2) group is transferred by the transcarboxylase to acetyl-CoA to form malonyl-CoA. In Listeria innocua serovar 6a (strain ATCC BAA-680 / CLIP 11262), this protein is Acetyl-coenzyme A carboxylase carboxyl transferase subunit beta.